The following is a 415-amino-acid chain: NADH-quinone oxidoreductase subunit D (415 aa).

This sequence belongs to the complex I 49 kDa subunit family. NDH-1 is composed of 14 different subunits. Subunits NuoB, C, D, E, F, and G constitute the peripheral sector of the complex.

The protein resides in the cell inner membrane. The enzyme catalyses a quinone + NADH + 5 H(+)(in) = a quinol + NAD(+) + 4 H(+)(out). Its function is as follows. NDH-1 shuttles electrons from NADH, via FMN and iron-sulfur (Fe-S) centers, to quinones in the respiratory chain. The immediate electron acceptor for the enzyme in this species is believed to be ubiquinone. Couples the redox reaction to proton translocation (for every two electrons transferred, four hydrogen ions are translocated across the cytoplasmic membrane), and thus conserves the redox energy in a proton gradient. The sequence is that of NADH-quinone oxidoreductase subunit D from Myxococcus xanthus (strain DK1622).